Here is a 620-residue protein sequence, read N- to C-terminus: Notoamide biosynthesis transcriptional activator notL' (620 aa).

Positions 1–26 are disordered; the sequence is MPPSSKSRRLPPAASDSAASDAQKRR. The zn(2)-C6 fungal-type DNA-binding region spans 33 to 59; that stretch reads CSACKARKLKCTGAPPCANCVKSRIEC. The segment at 591 to 620 is disordered; sequence ETGAFFLDPDQPSGNSTPIKSETPEGTAIS.

It is found in the nucleus. Its function is as follows. Transcription factor that probably regulates the expression of the gene cluster that mediates the biosynthesis of notoamide, a fungal indole alkaloid that belongs to a family of natural products containing a characteristic bicyclo[2.2.2]diazaoctane core. The protein is Notoamide biosynthesis transcriptional activator notL' of Aspergillus versicolor.